Consider the following 115-residue polypeptide: Large ribosomal subunit protein bL19 (115 aa).

The protein belongs to the bacterial ribosomal protein bL19 family.

In terms of biological role, this protein is located at the 30S-50S ribosomal subunit interface and may play a role in the structure and function of the aminoacyl-tRNA binding site. The chain is Large ribosomal subunit protein bL19 from Coxiella burnetii (strain CbuK_Q154) (Coxiella burnetii (strain Q154)).